Reading from the N-terminus, the 276-residue chain is ATP synthase subunit a 2 (276 aa).

Helical transmembrane passes span 45-65 (AVHVDSLGWSIALGALFVWLF), 105-125 (VIAPLALTVFCWIFLMNLMDL), 154-173 (VNVTLGMSLSVFFLIIYYSI), 226-246 (LLFILIALMPFWAQWALSVPW), and 247-267 (AIFHILVIVLQAFIFMMLTIV).

The protein belongs to the ATPase A chain family. As to quaternary structure, F-type ATPases have 2 components, CF(1) - the catalytic core - and CF(0) - the membrane proton channel. CF(1) has five subunits: alpha(3), beta(3), gamma(1), delta(1), epsilon(1). CF(0) has three main subunits: a(1), b(2) and c(9-12). The alpha and beta chains form an alternating ring which encloses part of the gamma chain. CF(1) is attached to CF(0) by a central stalk formed by the gamma and epsilon chains, while a peripheral stalk is formed by the delta and b chains.

It is found in the cell inner membrane. In terms of biological role, key component of the proton channel; it plays a direct role in the translocation of protons across the membrane. This chain is ATP synthase subunit a 2, found in Hahella chejuensis (strain KCTC 2396).